Consider the following 317-residue polypeptide: Ataxin-3 homolog (317 aa).

Residues 7–178 (INSIFFEHQE…RSDADDLISL (172 aa)) form the Josephin domain. The Nucleophile role is filled by C20. The Proton acceptor role is filled by H117. Residue N132 is part of the active site. UIM domains follow at residues 219 to 239 (SQEE…KDGS) and 247 to 264 (EIDE…QAPG). The segment at 254–317 (RKAIELSQAP…KKKEERNDEK (64 aa)) is disordered. Residues 276-293 (RSRSSTPPGASEPFSNAE) show a composition bias toward polar residues. Basic and acidic residues predominate over residues 294 to 317 (QQRRDRQKFLERFEKKKEERNDEK). Residues 296–299 (RRDR) are interaction with cdc-48.1 and cdc-48.2.

In terms of assembly, forms a complex composed of deubiquitinating enzyme atx-3, adapter ubxn-5 and cdc-48.1. Forms a complex composed of deubiquitinating enzyme atx-3, E4 ubiquitin-protein ligase ufd-2 and cdc-48.1. Interacts (via RRDR motif) with cdc-48.1 (via N-terminus) and cdc-48.2 (via N-terminus); the interaction with cdc-48.1 is not required for atx-3 enzymatic activity. Interacts (via C-terminus) with ubxn-5. May interact with ned-8. In terms of tissue distribution, expressed in germline (at protein level). Expressed in spermatheca, pharynx, dorsal and ventral cords, some head neurons, hypodermis, body wall muscles and coelomocytes.

The protein resides in the cytoplasm. It is found in the nucleus. It localises to the nucleolus. It carries out the reaction Thiol-dependent hydrolysis of ester, thioester, amide, peptide and isopeptide bonds formed by the C-terminal Gly of ubiquitin (a 76-residue protein attached to proteins as an intracellular targeting signal).. Its function is as follows. Acts as a chain editing deubiquitinating enzyme that binds and cleaves 'Lys-48'-linked polyubiquitin chains, with a preference for chains containing four or more ubiquitin molecules thereby modulating protein degradation by the ubiquitin-proteasome pathway. Probably by regulating the IGF-1-insulin-like pathway, regulates lifespan. Regulates germline DNA double-strand-break repair and apoptosis in response to DNA damage by recruiting E4 ubiquitin-protein ligase ufd-2 to DNA repair foci. Interacts with key regulators of transcription and represses transcription. Acts as a histone-binding protein that regulates transcription. The protein is Ataxin-3 homolog (atx-3) of Caenorhabditis elegans.